Here is a 595-residue protein sequence, read N- to C-terminus: Aspartate--tRNA ligase (595 aa).

Position 171 (Glu-171) interacts with L-aspartate. Positions 195–198 (QLFK) are aspartate. Residue Arg-217 coordinates L-aspartate. ATP contacts are provided by residues 217-219 (RDE) and Gln-226. L-aspartate is bound at residue His-448. Glu-482 is an ATP binding site. Residue Arg-489 coordinates L-aspartate. 534–537 (GLDR) contributes to the ATP binding site.

This sequence belongs to the class-II aminoacyl-tRNA synthetase family. Type 1 subfamily. Homodimer.

Its subcellular location is the cytoplasm. It carries out the reaction tRNA(Asp) + L-aspartate + ATP = L-aspartyl-tRNA(Asp) + AMP + diphosphate. Catalyzes the attachment of L-aspartate to tRNA(Asp) in a two-step reaction: L-aspartate is first activated by ATP to form Asp-AMP and then transferred to the acceptor end of tRNA(Asp). The chain is Aspartate--tRNA ligase from Erwinia tasmaniensis (strain DSM 17950 / CFBP 7177 / CIP 109463 / NCPPB 4357 / Et1/99).